A 98-amino-acid chain; its full sequence is NADH-ubiquinone oxidoreductase chain 4L (98 aa).

3 helical membrane passes run 1 to 21 (MTLIHMNIFMAFTMSLTGFLM), 29 to 49 (ALLCLEGMILSLFILVTLTVL), and 59 to 79 (MPIILLVFAACEAAIGLALLV).

Belongs to the complex I subunit 4L family. In terms of assembly, core subunit of respiratory chain NADH dehydrogenase (Complex I) which is composed of 45 different subunits.

The protein resides in the mitochondrion inner membrane. It catalyses the reaction a ubiquinone + NADH + 5 H(+)(in) = a ubiquinol + NAD(+) + 4 H(+)(out). Its function is as follows. Core subunit of the mitochondrial membrane respiratory chain NADH dehydrogenase (Complex I) which catalyzes electron transfer from NADH through the respiratory chain, using ubiquinone as an electron acceptor. Part of the enzyme membrane arm which is embedded in the lipid bilayer and involved in proton translocation. This chain is NADH-ubiquinone oxidoreductase chain 4L (MT-ND4L), found in Inia geoffrensis (Amazon river dolphin).